The chain runs to 686 residues: DNA ligase 2 (686 aa).

NAD(+) contacts are provided by residues 37 to 41, 86 to 87, and Glu121; these read DDEYD and SL. Lys123 functions as the N6-AMP-lysine intermediate in the catalytic mechanism. Residues Arg144, Glu179, Lys295, and Lys319 each contribute to the NAD(+) site. Zn(2+)-binding residues include Cys413, Cys416, Cys431, and Cys436. In terms of domain architecture, BRCT spans 593 to 681; sequence VRGEQLAGLN…GVQLPGVQAS (89 aa).

This sequence belongs to the NAD-dependent DNA ligase family. LigA subfamily. The cofactor is Mg(2+). Mn(2+) serves as cofactor.

The catalysed reaction is NAD(+) + (deoxyribonucleotide)n-3'-hydroxyl + 5'-phospho-(deoxyribonucleotide)m = (deoxyribonucleotide)n+m + AMP + beta-nicotinamide D-nucleotide.. DNA ligase that catalyzes the formation of phosphodiester linkages between 5'-phosphoryl and 3'-hydroxyl groups in double-stranded DNA using NAD as a coenzyme and as the energy source for the reaction. It is essential for DNA replication and repair of damaged DNA. This chain is DNA ligase 2, found in Deinococcus deserti (strain DSM 17065 / CIP 109153 / LMG 22923 / VCD115).